The chain runs to 248 residues: Tabserin (248 aa).

Residues 1 to 19 (MLKYSALFLYLIYVGGSES) form the signal peptide. The 225-residue stretch at 24 to 248 (IVGGVPVAEE…PYFENGLRKR (225 aa)) folds into the Peptidase S1 domain. Cysteine 49 and cysteine 65 form a disulfide bridge. Active-site charge relay system residues include histidine 64 and aspartate 111. 2 cysteine pairs are disulfide-bonded: cysteine 175-cysteine 189 and cysteine 201-cysteine 226. Catalysis depends on serine 205, which acts as the Charge relay system.

This sequence belongs to the peptidase S1 family. In terms of tissue distribution, expressed in salivary glands.

The protein localises to the secreted. Functionally, serine protease that inhibits blood coagulation in a dose-dependent manner. May act by destroying coagulant factors to inhibit blood coagulation. The protein is Tabserin of Tabanus yao (Horsefly).